Reading from the N-terminus, the 74-residue chain is Protein YkgV (74 aa).

This Escherichia coli (strain K12) protein is Protein YkgV.